Consider the following 88-residue polypeptide: Small ribosomal subunit protein eS21 (88 aa).

This sequence belongs to the eukaryotic ribosomal protein eS21 family. Component of the small ribosomal subunit. Mature ribosomes consist of a small (40S) and a large (60S) subunit. The 40S subunit contains about 33 different proteins and 1 molecule of RNA (18S). The 60S subunit contains about 49 different proteins and 3 molecules of RNA (25S, 5.8S and 5S).

The protein localises to the cytoplasm. In terms of biological role, required for the processing of the 20S rRNA-precursor to mature 18S rRNA in a late step of the maturation of 40S ribosomal subunits. Has a physiological role leading to 18S rRNA stability. The chain is Small ribosomal subunit protein eS21 (rps21) from Aspergillus fumigatus (strain ATCC MYA-4609 / CBS 101355 / FGSC A1100 / Af293) (Neosartorya fumigata).